The primary structure comprises 97 residues: Small ribosomal subunit protein uS17 (97 aa).

The interval 1 to 20 is disordered; it reads MSEATVNDNAAVKNEKGARK.

The protein belongs to the universal ribosomal protein uS17 family. As to quaternary structure, part of the 30S ribosomal subunit.

One of the primary rRNA binding proteins, it binds specifically to the 5'-end of 16S ribosomal RNA. This is Small ribosomal subunit protein uS17 from Corynebacterium jeikeium (strain K411).